Consider the following 640-residue polypeptide: Leucine-rich repeat-containing protein 4C (640 aa).

An N-terminal signal peptide occupies residues methionine 1–alanine 44. The 32-residue stretch at glutamine 45–threonine 76 folds into the LRRNT domain. 9 LRR repeats span residues asparagine 77–histidine 98, histidine 101–glycine 122, asparagine 125–tyrosine 146, lysine 149–arginine 170, serine 173–glycine 195, asparagine 198–isoleucine 219, lysine 220–glycine 241, histidine 244–asparagine 265, and serine 268–proline 289. The region spanning asparagine 301–alanine 353 is the LRRCT domain. Positions proline 354–asparagine 442 constitute an Ig-like C2-type domain. A disulfide bridge links cysteine 375 with cysteine 426. The tract at residues glutamate 463 to aspartate 483 is disordered. The helical transmembrane segment at isoleucine 528 to tyrosine 548 threads the bilayer. Serine 631 carries the post-translational modification Phosphoserine.

In terms of assembly, interacts with NTNG1 and WHRN. As to expression, highly expressed in the cerebral cortex, including frontal, parietal and occipital lobes. Putamen, amygdala, hippocampus and medulla oblongata show moderate expression. Caudate nucleus and thalamus express small amounts, whereas other brain regions show very weak or no expression.

It is found in the postsynaptic cell membrane. May promote neurite outgrowth of developing thalamic neurons. In Homo sapiens (Human), this protein is Leucine-rich repeat-containing protein 4C (LRRC4C).